A 589-amino-acid chain; its full sequence is Vesicular glutamate transporter 3 (589 aa).

At 1–76 (MPFKAFDTFK…CHCCGLPKRY (76 aa)) the chain is on the cytoplasmic side. The span at 40–49 (TEEEDNIELN) shows a compositional bias: acidic residues. Residues 40-61 (TEEEDNIELNEEGRPVQTSRPS) are disordered. The helical transmembrane segment at 77–97 (IIAIMSGLGFCISFGIRCNLG) threads the bilayer. Residues 98-130 (VAIVEMVNNSTVYVDGKPEIQTAQFNWDPETVG) are Vesicular-facing. N106 is a glycosylation site (N-linked (GlcNAc...) asparagine). Residues 131-151 (LIHGSFFWGYIMTQIPGGFIS) traverse the membrane as a helical segment. Topologically, residues 152 to 153 (NK) are cytoplasmic. A helical transmembrane segment spans residues 154-174 (FAANRVFGAAIFLTSTLNMFI). Residues 175-182 (PSAARVHY) are Vesicular-facing. The chain crosses the membrane as a helical span at residues 183 to 203 (GCVMCVRILQGLVEGVTYPAC). The Cytoplasmic segment spans residues 204 to 221 (HGMWSKWAPPLERSRLAT). The chain crosses the membrane as a helical span at residues 222–242 (TSFCGSYAGAVVAMPLAGVLV). Residues 243-249 (QYIGWSS) are Vesicular-facing. A helical membrane pass occupies residues 250 to 270 (VFYIYGMFGIIWYMFWLLQAY). Over 271–314 (ECPAAHPTISNEEKTYIETSIGEGANVVSLSKFSTPWKRFFTSL) the chain is Cytoplasmic. The helical transmembrane segment at 315–335 (PVYAIIVANFCRSWTFYLLLI) threads the bilayer. Over 336 to 353 (SQPAYFEEVFGFAISKVG) the chain is Vesicular. Residues 354-374 (LLSAVPHMVMTIVVPIGGQLA) form a helical membrane-spanning segment. At 375-390 (DYLRSRQILTTTAVRK) the chain is on the cytoplasmic side. The helical transmembrane segment at 391-411 (IMNCGGFGMEATLLLVVGFSH) threads the bilayer. Topologically, residues 412–413 (TK) are vesicular. The helical transmembrane segment at 414–434 (GVAISFLVLAVGFSGFAISGF) threads the bilayer. Topologically, residues 435 to 447 (NVNHLDIAPRYAS) are cytoplasmic. A helical transmembrane segment spans residues 448-468 (ILMGISNGVGTLSGMVCPLIV). Residues 469–481 (GAMTRHKTREEWQ) lie on the Vesicular side of the membrane. The chain crosses the membrane as a helical span at residues 482–502 (NVFLIAALVHYSGVIFYGVFA). Over 503–586 (SGEKQEWADP…SYQNEERNFS (84 aa)) the chain is Cytoplasmic. The interval 559–589 (KKEWKGQRGATLDEEELTSYQNEERNFSTIS) is disordered. Over residues 580–589 (NEERNFSTIS) the composition is skewed to basic and acidic residues.

It belongs to the major facilitator superfamily. Sodium/anion cotransporter family. VGLUT subfamily. In terms of tissue distribution, expressed in amygdala, cerebellum, hippocampus, medulla, spinal cord and thalamus.

The protein localises to the cytoplasmic vesicle. It localises to the secretory vesicle. Its subcellular location is the synaptic vesicle membrane. It is found in the cell membrane. The protein resides in the synapse. The protein localises to the synaptosome. It catalyses the reaction L-glutamate(out) = L-glutamate(in). The catalysed reaction is 3 Na(+)(out) + phosphate(out) = 3 Na(+)(in) + phosphate(in). The enzyme catalyses chloride(in) = chloride(out). The L-glutamate uniporter activity exhibits a biphasic dependence on chloride concentration. Chloride channel activity is allosterically activated by lumenal H(+) and Cl(-) leading to synaptic vesicles acidification. The glutamate transport activity is allosterically activated by lumenal H(+) and Cl(-), preventing non-vesicular L-glutamate release. In terms of biological role, multifunctional transporter that transports L-glutamate as well as multiple ions such as chloride, sodium and phosphate. At the synaptic vesicle membrane, mainly functions as an uniporter that mediates the uptake of L-glutamate into synaptic vesicles at presynaptic nerve terminals of excitatory neural cells. The L-glutamate uniporter activity is electrogenic and is driven by the proton electrochemical gradient, mainly by the electrical gradient established by the vacuolar H(+)-ATPase across the synaptic vesicle membrane. In addition, functions as a chloride channel that allows a chloride permeation through the synaptic vesicle membrane that affects the proton electrochemical gradient and promotes synaptic vesicles acidification. At the plasma membrane, following exocytosis, functions as a symporter of Na(+) and phosphate from the extracellular space to the cytoplasm allowing synaptic phosphate homeostasis regulation. The symporter activity is electrogenic. Moreover, operates synergistically with SLC18A3/VACHT under a constant H(+) gradient, thereby allowing striatal vesicular acetylcholine uptake. The sequence is that of Vesicular glutamate transporter 3 from Homo sapiens (Human).